Here is a 431-residue protein sequence, read N- to C-terminus: Putative helicase 055L (431 aa).

In terms of domain architecture, Helicase ATP-binding spans 73 to 222 (WGHVTSKGYC…ALGAFFGRED (150 aa)). 86-93 (CPPGFGKT) provides a ligand contact to ATP. The DEAH box signature appears at 175–178 (DEAH). The tract at residues 403–431 (KCDASRPSQSTPTPTGSSQPAPRTRRPQR) is disordered. Positions 407 to 424 (SRPSQSTPTPTGSSQPAP) are enriched in low complexity.

The chain is Putative helicase 055L from Frog virus 3 (isolate Goorha) (FV-3).